Here is a 123-residue protein sequence, read N- to C-terminus: Large ribosomal subunit protein bL12 (123 aa).

Belongs to the bacterial ribosomal protein bL12 family. Homodimer. Part of the ribosomal stalk of the 50S ribosomal subunit. Forms a multimeric L10(L12)X complex, where L10 forms an elongated spine to which 2 to 4 L12 dimers bind in a sequential fashion. Binds GTP-bound translation factors.

Forms part of the ribosomal stalk which helps the ribosome interact with GTP-bound translation factors. Is thus essential for accurate translation. The sequence is that of Large ribosomal subunit protein bL12 from Chlorobium phaeovibrioides (strain DSM 265 / 1930) (Prosthecochloris vibrioformis (strain DSM 265)).